Here is a 317-residue protein sequence, read N- to C-terminus: Transaldolase (317 aa).

Residue lysine 132 is the Schiff-base intermediate with substrate of the active site.

This sequence belongs to the transaldolase family. Type 1 subfamily. As to quaternary structure, homodimer.

The protein resides in the cytoplasm. The enzyme catalyses D-sedoheptulose 7-phosphate + D-glyceraldehyde 3-phosphate = D-erythrose 4-phosphate + beta-D-fructose 6-phosphate. It functions in the pathway carbohydrate degradation; pentose phosphate pathway; D-glyceraldehyde 3-phosphate and beta-D-fructose 6-phosphate from D-ribose 5-phosphate and D-xylulose 5-phosphate (non-oxidative stage): step 2/3. Its function is as follows. Transaldolase is important for the balance of metabolites in the pentose-phosphate pathway. The polypeptide is Transaldolase (Histophilus somni (strain 129Pt) (Haemophilus somnus)).